Reading from the N-terminus, the 419-residue chain is Transcription termination factor Rho (419 aa).

Residues 48–123 (DIFGDGVLEI…LKVNKVNYDK (76 aa)) form the Rho RNA-BD domain. 3 RNA-binding regions span residues 61 to 66 (GFGFLR), 78 to 80 (DIY), and 108 to 110 (ERY). Residues 169 to 174 (GRGQRG), 181 to 186 (KAGKTM), and R212 contribute to the ATP site. The segment at 284–288 (VLTGG) is RNA-binding 2.

It belongs to the Rho family. Homohexamer. The homohexamer assembles into an open ring structure.

Facilitates transcription termination by a mechanism that involves Rho binding to the nascent RNA, activation of Rho's RNA-dependent ATPase activity, and release of the mRNA from the DNA template. This chain is Transcription termination factor Rho, found in Buchnera aphidicola subsp. Baizongia pistaciae (strain Bp).